The sequence spans 220 residues: Claudin-22 (220 aa).

Topologically, residues 1–10 (MGLVFRTATQ) are cytoplasmic. The helical transmembrane segment at 11–31 (AAALLLSLLGWVLSCLTNYLP) threads the bilayer. Residues 32-81 (HWKNLNLELNEMENWTMGLWKSCVIQEEVGRQCKDFDSFLALPAELQVSR) lie on the Extracellular side of the membrane. The helical transmembrane segment at 82-102 (VLMSLCNGLGLLGLLASGCGL) threads the bilayer. At 103–120 (DCLRLGETQEGLKKRLLT) the chain is on the cytoplasmic side. A helical transmembrane segment spans residues 121–141 (LGGTLLWTSGVMVLVPVSWVA). Residues 142–164 (HKTVREFWDETMPEIVPRWEFGE) are Extracellular-facing. The chain crosses the membrane as a helical span at residues 165–185 (ALFLGWFAGFCLVLGGCVLHC). Residues 186-220 (AACWSPAPAASSHYAVAGPRDHQQHLELKQANPEI) lie on the Cytoplasmic side of the membrane.

This sequence belongs to the claudin family.

It localises to the cell junction. It is found in the tight junction. The protein localises to the cell membrane. Plays a major role in tight junction-specific obliteration of the intercellular space, through calcium-independent cell-adhesion activity. This Mus musculus (Mouse) protein is Claudin-22 (Cldn22).